We begin with the raw amino-acid sequence, 317 residues long: Ribonuclease Z (317 aa).

Residues His63, His65, Asp67, His68, His143, Asp214, and His272 each contribute to the Zn(2+) site. Asp67 functions as the Proton acceptor in the catalytic mechanism.

It belongs to the RNase Z family. As to quaternary structure, homodimer. It depends on Zn(2+) as a cofactor.

It catalyses the reaction Endonucleolytic cleavage of RNA, removing extra 3' nucleotides from tRNA precursor, generating 3' termini of tRNAs. A 3'-hydroxy group is left at the tRNA terminus and a 5'-phosphoryl group is left at the trailer molecule.. Zinc phosphodiesterase, which displays some tRNA 3'-processing endonuclease activity. Probably involved in tRNA maturation, by removing a 3'-trailer from precursor tRNA. The sequence is that of Ribonuclease Z from Ligilactobacillus salivarius (strain UCC118) (Lactobacillus salivarius).